The chain runs to 256 residues: Trypsin alpha (256 aa).

The first 22 residues, 1 to 22 (MLKIVILLSAVVCALGGTVPEG), serve as a signal peptide directing secretion. Residues 23 to 30 (LLPQLDGR) constitute a propeptide, activation peptide. The Peptidase S1 domain occupies 31–254 (IVGGSATTIS…LRSWVISTAN (224 aa)). C56 and C72 are joined by a disulfide. Catalysis depends on charge relay system residues H71 and D116. 2 disulfide bridges follow: C180-C197 and C206-C230. Residue S210 is the Charge relay system of the active site.

It belongs to the peptidase S1 family.

It localises to the secreted. The protein resides in the extracellular space. The enzyme catalyses Preferential cleavage: Arg-|-Xaa, Lys-|-Xaa.. The polypeptide is Trypsin alpha (alphaTry) (Drosophila erecta (Fruit fly)).